A 503-amino-acid polypeptide reads, in one-letter code: Glutamate--tRNA ligase (503 aa).

Positions Pro12–Gly22 match the 'HIGH' region motif. Positions Lys259–Arg263 match the 'KMSKS' region motif. Lys262 lines the ATP pocket.

Belongs to the class-I aminoacyl-tRNA synthetase family. Glutamate--tRNA ligase type 1 subfamily. In terms of assembly, monomer.

The protein localises to the cytoplasm. It carries out the reaction tRNA(Glu) + L-glutamate + ATP = L-glutamyl-tRNA(Glu) + AMP + diphosphate. Functionally, catalyzes the attachment of glutamate to tRNA(Glu) in a two-step reaction: glutamate is first activated by ATP to form Glu-AMP and then transferred to the acceptor end of tRNA(Glu). This Chlorobaculum parvum (strain DSM 263 / NCIMB 8327) (Chlorobium vibrioforme subsp. thiosulfatophilum) protein is Glutamate--tRNA ligase.